The sequence spans 52 residues: Transcriptional regulator SlrA (52 aa).

Residues 1 to 38 form the Sin domain; sequence MKTHVKKDLDKGWHMLIQEARSIGLGIHDVRQFLESET.

Component of the SlrR/SlrA complex.

Functionally, required specifically for induction of eps and yqxM operons by antagonizing SinR. Regulates SlrR activity. Controls the initiation of biofilm formation. The sequence is that of Transcriptional regulator SlrA (slrA) from Bacillus subtilis (strain 168).